A 396-amino-acid chain; its full sequence is MQDSSLNNYANHKNFILMLIILFLMEFARGMYILSYINFLPTVTSIAVAITSLAFSIHFIADASTNFVIGFLLKKFGTKIVLTTGFILAFTSLFLVIWFPASPFVIIFSAMMLGIAVSPIWVIMLSSVEEDKRGKQMGYVYFSWLLGLLVGMVFMNLLIKVHPTRFAFMMSLVVLIAWILYYFVDVKLTNYNTRPVKAQLRQIVDVTKRHLLLFPGILLQGAAIAALVPILPTYATKVINVSTIEYTVAIIIGGIGCAVSMLFLSKLIDNRSRNFMYGVILSGFILYMILIFTLSMIVNIHIVWIIALAIGLMYGILLPAWNTFMARFIKSDEQEETWGVFNSIQGFGSMIGPLFGGLITQFTNNLNNTFYFSALIFLVLAVFYGSYFIANREKAK.

The next 12 membrane-spanning stretches (helical) occupy residues 15-34 (FILM…MYIL), 46-73 (IAVA…GFLL), 80-99 (IVLT…VIWF), 105-126 (VIIF…IMLS), 138-159 (GYVY…NLLI), 165-184 (RFAF…YYFV), 211-231 (LLLF…VPIL), 243-264 (TIEY…MLFL), 276-298 (MYGV…SMIV), 304-326 (WIIA…TFMA), 338-358 (WGVF…FGGL), and 370-390 (FYFS…YFIA).

Belongs to the major facilitator superfamily. LtaA family.

The protein localises to the cell membrane. It participates in cell wall biogenesis; lipoteichoic acid biosynthesis. Its function is as follows. Proton-coupled antiporter flippase that catalyzes the translocation, from the inner to the outer leaflet of the cell membrane, of the lipid-linked disaccharide (anchor-LLD) that anchors lipoteichoic acids (LTA) to the cell membrane. The polypeptide is Proton-coupled antiporter flippase LtaA (ltaA) (Staphylococcus aureus (strain MRSA252)).